The primary structure comprises 382 residues: uncharacterized protein (382 aa).

12 consecutive transmembrane segments (helical) span residues 14 to 34 (GLLLLTLAIAVLNTLVPLWLA), 45 to 65 (VVSSSYFTGNLVGTLLTGYVI), 79 to 99 (FIFAAGCAGLGLMIGFWSWLA), 102 to 122 (FVAGIGCAMIWVVVESALMCS), 131 to 151 (LLAAYMMVYYVGTFLGQLLVS), 157 to 177 (LMSVLPWVTGLTLAGILPLLF), 204 to 224 (LGVNGCIISGIVLGSLYGLMP), 235 to 255 (ASIGFWMAVLVSAGILGQWPI), 270 to 290 (VQVFVVILGSIAMLSQAAMAP), 291 to 311 (ALFILGAAGFTLYPVAMAWAC), 325 to 345 (ALLLSYTVGSLLGPSFTAMLM), and 348 to 368 (FSDNLLFIMIASVSFIYLLML).

Belongs to the major facilitator superfamily. YcaD (TC 2.A.1.26) family.

The protein resides in the cell inner membrane. This is an uncharacterized protein from Escherichia coli O6:K15:H31 (strain 536 / UPEC).